A 631-amino-acid chain; its full sequence is Vacuolar-sorting receptor 6 (631 aa).

An N-terminal signal peptide occupies residues 1–25 (MSLIHKGATLALFLALTMVVNGVFG). At 26–563 (RFIVEKSSVT…CIERSGSRIG (538 aa)) the chain is on the lumenal side. The 109-residue stretch at 57-165 (NYGGYMIGSV…SFANTLKQAL (109 aa)) folds into the PA domain. N-linked (GlcNAc...) asparagine glycosylation is found at Asn294 and Asn431. EGF-like domains follow at residues 413 to 463 (ETNE…TSCE) and 494 to 540 (ETSG…FECK). 5 disulfide bridges follow: Cys417–Cys435, Cys424–Cys444, Cys446–Cys462, Cys498–Cys511, and Cys530–Cys539. Residues 564–584 (WFPTFVILAAVASICVGGYVF) form a helical membrane-spanning segment. The Cytoplasmic portion of the chain corresponds to 585-631 (YKYRLRSYMDSEIMAIMSQYMPLESQNTTDPMTGESQHQQLRLTSAA). A Tyrosine-based internalization motif motif is present at residues 604–607 (YMPL). Residues 610 to 631 (QNTTDPMTGESQHQQLRLTSAA) are disordered.

The protein belongs to the VSR (BP-80) family. As to expression, expressed in seedlings, roots, leaves, flowers and siliques.

The protein localises to the membrane. Its subcellular location is the golgi apparatus membrane. It localises to the cytoplasmic vesicle. It is found in the clathrin-coated vesicle membrane. The protein resides in the prevacuolar compartment membrane. Functionally, vacuolar-sorting receptor (VSR) involved in clathrin-coated vesicles sorting from Golgi apparatus to vacuoles. The sequence is that of Vacuolar-sorting receptor 6 (VSR6) from Arabidopsis thaliana (Mouse-ear cress).